We begin with the raw amino-acid sequence, 215 residues long: uncharacterized protein (215 aa).

It to T.pallidum TP_0127, TP_0618 and TP_0619.

This is an uncharacterized protein from Treponema pallidum (strain Nichols).